We begin with the raw amino-acid sequence, 532 residues long: Cocaine esterase (532 aa).

Pyrrolidone carboxylic acid is present on Gln1. Cys69 and Cys96 are disulfide-bonded. Catalysis depends on Ser201, which acts as the Acyl-ester intermediate. Asn249 carries N-linked (GlcNAc...) asparagine glycosylation. Cys253 and Cys264 are joined by a disulfide. Catalysis depends on charge relay system residues Glu318 and His430. Residues 529–532 (HTEL) carry the Prevents secretion from ER motif.

Belongs to the type-B carboxylesterase/lipase family. As to quaternary structure, monomer.

Its subcellular location is the endoplasmic reticulum lumen. The catalysed reaction is a carboxylic ester + H2O = an alcohol + a carboxylate + H(+). It carries out the reaction cocaine + H2O = ecgonine methyl ester + benzoate + H(+). It catalyses the reaction 2-(5Z,8Z,11Z,14Z-eicosatetraenoyl)-glycerol + H2O = glycerol + (5Z,8Z,11Z,14Z)-eicosatetraenoate + H(+). The enzyme catalyses prostaglandin E2 1-glyceryl ester + H2O = prostaglandin E2 + glycerol + H(+). The catalysed reaction is prostaglandin F2alpha 1-glyceryl ester + H2O = prostaglandin F2alpha + glycerol + H(+). Its function is as follows. Involved in the detoxification of xenobiotics and in the activation of ester and amide prodrugs. Converts monoacylglycerides to free fatty acids and glycerol. Hydrolyzes of 2-arachidonoylglycerol and prostaglandins. In Oryctolagus cuniculus (Rabbit), this protein is Cocaine esterase (CES2).